The sequence spans 455 residues: Ammonium transporter Rh type B (455 aa).

Residues 1–10 lie on the Cytoplasmic side of the membrane; it reads MARVPRHRRL. Residues 11–31 traverse the membrane as a helical segment; it reads VLPLLCLLFQGATALLFAIFV. Residues 32–58 are Extracellular-facing; the sequence is RYNHETDAALWHWGNHSNVDNEFYFRY. Residue N46 is glycosylated (N-linked (GlcNAc...) asparagine). A helical transmembrane segment spans residues 59–79; sequence PSFQDVHVMVFVGFGFLMVFL. At 80 to 83 the chain is on the cytoplasmic side; it reads QRYG. The helical transmembrane segment at 84–104 threads the bilayer; that stretch reads FSSVGFTFLVASLTLQWATLL. Topologically, residues 105–121 are extracellular; that stretch reads QGFLHSFHGGHIHVGVE. Residues 122-142 traverse the membrane as a helical segment; sequence SLINADFCAGAVLISFGAVLG. Residues 143 to 146 are Cytoplasmic-facing; the sequence is KTGP. A helical membrane pass occupies residues 147–167; sequence AQLLLMALLEAVLFSVNEFIL. The Extracellular segment spans residues 168 to 175; that stretch reads LSLLGVRD. The helical transmembrane segment at 176 to 198 threads the bilayer; that stretch reads AGGSMTIHTFGAYFGLFLSWVLY. Over 199-216 the chain is Cytoplasmic; the sequence is RSQLEKSRHRQSSVYNSD. A helical membrane pass occupies residues 217–237; that stretch reads LFAMIGTIFLWVFWPSFNSAP. The Extracellular segment spans residues 238–248; it reads TALGDGQHRTV. A helical membrane pass occupies residues 249–269; the sequence is VNTYYSLTASTLSTFALSALV. Topologically, residues 270–279 are cytoplasmic; the sequence is SGDGRLDMVH. Residues 280–300 traverse the membrane as a helical segment; sequence VQNAALAGGVVVGTSSEMMLT. Residue P301 is a topological domain, extracellular. A helical transmembrane segment spans residues 302-322; that stretch reads FGALAAGFLAGTVSTLGYKFF. Over 323-343 the chain is Cytoplasmic; the sequence is TPILESRFKLQDTCGVHNLHG. Residues 344 to 364 form a helical membrane-spanning segment; the sequence is MPGVLGAILGVVVAALATHEA. Residues 365–390 lie on the Extracellular side of the membrane; that stretch reads YGDGLQSVFPLIAKGQRSATSQAVYQ. Residues 391–411 form a helical membrane-spanning segment; that stretch reads LFGMFVTLVFASVGGSLGGLL. Over 412–455 the chain is Cytoplasmic; the sequence is LRLPFLDSPPDSQCFEDQVYWEVPGEQETETQRPLRGGESDTRA. Residues 413–421 are interaction with ANK3; that stretch reads RLPFLDSPP. Residues 434 to 455 are disordered; the sequence is VPGEQETETQRPLRGGESDTRA. A compositionally biased stretch (basic and acidic residues) spans 441 to 455; sequence ETQRPLRGGESDTRA.

It belongs to the ammonium transporter (TC 2.A.49) family. Rh subfamily. Interacts (via C-terminus) with ANK2 and ANK3; required for targeting to the basolateral membrane. N-glycosylated. Expressed in kidney by connecting segments and collecting tubules. Also expressed in liver by perivenous hepatocytes. Expressed in the forestomach and the fundus of the stomach. Expressed in duodenum, jejunum, ileum and colon at the level of villous (at protein level). Specifically expressed in kidney where it is restricted to the epithelial linings of the convoluted tubules and the loop of Henle. Also detected in ovary. Expressed by hepatocytes and dermal hair follicles and papillae.

It is found in the cell membrane. The protein localises to the basolateral cell membrane. It carries out the reaction NH4(+)(in) = NH4(+)(out). It catalyses the reaction methylamine(out) = methylamine(in). The enzyme catalyses CO2(out) = CO2(in). Its activity is regulated as follows. Inhibited by amiloride. Functionally, ammonium transporter involved in the maintenance of acid-base homeostasis. Transports ammonium and its related derivative methylammonium across the basolateral plasma membrane of epithelial cells likely contributing to renal transepithelial ammonia transport and ammonia metabolism. May transport either NH4(+) or NH3 ammonia species predominantly mediating an electrogenic NH4(+) transport. May act as a CO2 channel providing for renal acid secretion. This chain is Ammonium transporter Rh type B (Rhbg), found in Mus musculus (Mouse).